A 108-amino-acid chain; its full sequence is Peptidyl-prolyl cis-trans isomerase FKBP1A (108 aa).

Residue Ser-10 is modified to Phosphoserine. The PPIase FKBP-type domain occupies Gly-20–Glu-108. Lys-53 bears the N6-acetyllysine; alternate mark. Lys-53 bears the N6-succinyllysine; alternate mark.

Belongs to the FKBP-type PPIase family. FKBP1 subfamily. In terms of assembly, interacts with TGFBR1; prevents TGFBR1 phosphorylation by TGFBR2 and stabilizes it in the inactive conformation. Interacts with ACVR1B and SMAD7. Identified in a complex composed of RYR1, PDE4D, PKA, FKBP1A and protein phosphatase 1 (PP1). Interacts directly with RYR2. Interacts directly with RYR3. Interacts directly with RYR1. Interacts with GLMN; rapamycin and FK506 abolish the interaction with GLMN in a dose dependent manner. As to expression, ubiquitous.

The protein resides in the cytoplasm. It localises to the cytosol. Its subcellular location is the sarcoplasmic reticulum membrane. The catalysed reaction is [protein]-peptidylproline (omega=180) = [protein]-peptidylproline (omega=0). With respect to regulation, inhibited by both FK506 and rapamycin. Its function is as follows. Keeps in an inactive conformation TGFBR1, the TGF-beta type I serine/threonine kinase receptor, preventing TGF-beta receptor activation in absence of ligand. Recruits SMAD7 to ACVR1B which prevents the association of SMAD2 and SMAD3 with the activin receptor complex, thereby blocking the activin signal. May modulate the RYR1 calcium channel activity. PPIases accelerate the folding of proteins. It catalyzes the cis-trans isomerization of proline imidic peptide bonds in oligopeptides. The sequence is that of Peptidyl-prolyl cis-trans isomerase FKBP1A (Fkbp1a) from Rattus norvegicus (Rat).